Consider the following 208-residue polypeptide: MGVTVVSHPLVQHKLTIMRKKETSTASFRRLLKEISLLLCYEVTRDLELTTMPIETPLMPMDAPVLEGKKLVFASILRAGNGLLEGMLDLVPAARVAHIGLYRDHDTLQPVEYYFKAPEDIVNRLIIVVDPMLATGHSAIAAIDKLKERGATNIRFLCLLAAPEGIKRFTEAHPDVDVFTASIDERLDEKGYIVPGLGDAGDRMYGTK.

5-phospho-alpha-D-ribose 1-diphosphate is bound by residues arginine 78, arginine 103, and 130-138 (DPMLATGHS). Residues isoleucine 193 and 198-200 (GDA) each bind uracil. A 5-phospho-alpha-D-ribose 1-diphosphate-binding site is contributed by aspartate 199.

The protein belongs to the UPRTase family. It depends on Mg(2+) as a cofactor.

It catalyses the reaction UMP + diphosphate = 5-phospho-alpha-D-ribose 1-diphosphate + uracil. It functions in the pathway pyrimidine metabolism; UMP biosynthesis via salvage pathway; UMP from uracil: step 1/1. With respect to regulation, allosterically activated by GTP. Catalyzes the conversion of uracil and 5-phospho-alpha-D-ribose 1-diphosphate (PRPP) to UMP and diphosphate. This chain is Uracil phosphoribosyltransferase, found in Brucella anthropi (strain ATCC 49188 / DSM 6882 / CCUG 24695 / JCM 21032 / LMG 3331 / NBRC 15819 / NCTC 12168 / Alc 37) (Ochrobactrum anthropi).